Here is a 158-residue protein sequence, read N- to C-terminus: Class 10 plant pathogenesis-related protein 2B (158 aa).

Residue Asp8 participates in trans-zeatin binding. 3 residues coordinate Ca(2+): Pro32, Val35, and Ile38. The trans-zeatin site is built by Glu60, His69, Tyr81, and Tyr83. Tyr83 is a melatonin binding site.

This sequence belongs to the BetVI family.

The protein resides in the cytoplasm. The protein localises to the cytosol. Class II ribonuclease (RNase). Binds to several cytokinins including natural adenine-type (e.g. trans-zeatin and kinetin) and artificial urea-type (e.g. N,N'-diphenylurea and N-phenyl-N'-(2-chloro-4-pyridyl)urea) hormones. Interacts with melatonin. This chain is Class 10 plant pathogenesis-related protein 2B, found in Lupinus luteus (European yellow lupine).